The sequence spans 106 residues: MVNVPKTRKTYCKGKTCRKHTQHKVTQYKAGKASLFAQGKRRYDRKQSGFGGQTKPVFHKKAKTTKKVVLRLECVKCKTRAQLTLKRCKHFELGGEKKQKGQALQF.

Residue lysine 40 is modified to N6-methyllysine; by RKM3. At lysine 55 the chain carries N6-methyllysine; by RKM4.

Belongs to the eukaryotic ribosomal protein eL42 family. Component of the large ribosomal subunit (LSU). Mature yeast ribosomes consist of a small (40S) and a large (60S) subunit. The 40S small subunit contains 1 molecule of ribosomal RNA (18S rRNA) and 33 different proteins (encoded by 57 genes). The large 60S subunit contains 3 rRNA molecules (25S, 5.8S and 5S rRNA) and 46 different proteins (encoded by 81 genes). Post-translationally, in wild-type cells, 78% of L42 is monomethylated at both Lys-40 and Lys-55, and 22% are a mixture of species with either residue monomethylated.

Its subcellular location is the cytoplasm. Component of the ribosome, a large ribonucleoprotein complex responsible for the synthesis of proteins in the cell. The small ribosomal subunit (SSU) binds messenger RNAs (mRNAs) and translates the encoded message by selecting cognate aminoacyl-transfer RNA (tRNA) molecules. The large subunit (LSU) contains the ribosomal catalytic site termed the peptidyl transferase center (PTC), which catalyzes the formation of peptide bonds, thereby polymerizing the amino acids delivered by tRNAs into a polypeptide chain. The nascent polypeptides leave the ribosome through a tunnel in the LSU and interact with protein factors that function in enzymatic processing, targeting, and the membrane insertion of nascent chains at the exit of the ribosomal tunnel. In Saccharomyces cerevisiae (strain ATCC 204508 / S288c) (Baker's yeast), this protein is Large ribosomal subunit protein eL42A.